A 321-amino-acid polypeptide reads, in one-letter code: ATP-dependent 6-phosphofructokinase (321 aa).

Gly-12 is a binding site for ATP. ADP contacts are provided by residues 22–26 (RGVVR) and 55–60 (RYSVSD). ATP-binding positions include 73–74 (RF) and 103–106 (GDGS). Asp-104 provides a ligand contact to Mg(2+). A substrate-binding site is contributed by 127 to 129 (TID). Asp-129 (proton acceptor) is an active-site residue. Arg-156 is an ADP binding site. Residues Arg-164 and 171–173 (MGR) each bind substrate. ADP contacts are provided by residues 187–189 (GCE) and 215–217 (KRH). Substrate contacts are provided by residues Glu-224, Arg-245, and 251–254 (HVQR).

The protein belongs to the phosphofructokinase type A (PFKA) family. ATP-dependent PFK group I subfamily. Prokaryotic clade 'B1' sub-subfamily. In terms of assembly, homotetramer. Mg(2+) serves as cofactor.

It localises to the cytoplasm. It carries out the reaction beta-D-fructose 6-phosphate + ATP = beta-D-fructose 1,6-bisphosphate + ADP + H(+). The protein operates within carbohydrate degradation; glycolysis; D-glyceraldehyde 3-phosphate and glycerone phosphate from D-glucose: step 3/4. Its activity is regulated as follows. Allosterically activated by ADP and other diphosphonucleosides, and allosterically inhibited by phosphoenolpyruvate. In terms of biological role, catalyzes the phosphorylation of D-fructose 6-phosphate to fructose 1,6-bisphosphate by ATP, the first committing step of glycolysis. This is ATP-dependent 6-phosphofructokinase from Mannheimia succiniciproducens (strain KCTC 0769BP / MBEL55E).